Consider the following 479-residue polypeptide: Shugoshin (479 aa).

The stretch at 36 to 76 forms a coiled coil; it reads SLRIRSLESEVSNLLSENVSLREQIITLTQELERFEAARTL. 3 disordered regions span residues 109-145, 220-247, and 263-479; these read SRAV…GFLD, EHSL…QADT, and AKRK…SMPP. The span at 123 to 132 shows a compositional bias: basic and acidic residues; the sequence is QSRESGPKEV. The span at 270–286 shows a compositional bias: acidic residues; it reads EDDESLFESSPSEDDEF. 2 stretches are compositionally biased toward polar residues: residues 290-303 and 318-328; these read RPAQ…QNEH and QSPTLSSQNDH. Composition is skewed to basic and acidic residues over residues 335-352 and 379-388; these read PQSE…RVLE and GYNEKSEKPL. Polar residues predominate over residues 400–411; it reads KNASPKKSSTRT.

This sequence belongs to the shugoshin family.

The protein localises to the nucleus. It localises to the chromosome. Its subcellular location is the centromere. Functionally, plays a central role in chromosome cohesion during cell division by preventing premature dissociation of cohesin complex from centromeres after prophase, when most of cohesin complex dissociates from chromosomes arms. The polypeptide is Shugoshin (sgo1) (Emericella nidulans (strain FGSC A4 / ATCC 38163 / CBS 112.46 / NRRL 194 / M139) (Aspergillus nidulans)).